We begin with the raw amino-acid sequence, 137 residues long: MLPLSLLKTAQNHPMLVELKNGETYNGHLVSCDNWMNINLREVICTSRDGDKFWRMPECYIRGSTIKYLRIPDEIIDMVREEAAKGRGRGGPQQKQQKGRGMGGAGRGVFGGRGRGGIPGAGRGQPEKKPGRQAGKQ.

M1 is subject to N-acetylmethionine. A Sm domain is found at 2 to 75; sequence LPLSLLKTAQ…IKYLRIPDEI (74 aa). The disordered stretch occupies residues 82–137; that stretch reads EAAKGRGRGGPQQKQQKGRGMGGAGRGVFGGRGRGGIPGAGRGQPEKKPGRQAGKQ. Over residues 100–123 the composition is skewed to gly residues; sequence RGMGGAGRGVFGGRGRGGIPGAGR.

The protein belongs to the snRNP Sm proteins family. As to quaternary structure, component of the precatalytic spliceosome (spliceosome B complex). Component of the U4/U6-U5 tri-snRNP complex, a building block of the precatalytic spliceosome (spliceosome B complex). The U4/U6-U5 tri-snRNP complex is composed of the U4, U6 and U5 snRNAs and at least PRPF3, PRPF4, PRPF6, PRPF8, PRPF31, SNRNP200, TXNL4A, SNRNP40, SNRPB, SNRPD1, SNRPD2, SNRPD3, SNRPE, SNRPF, SNRPG, DDX23, CD2BP2, PPIH, SNU13, EFTUD2, SART1 and USP39, plus LSM2, LSM3, LSM4, LSM5, LSM6, LSM7 and LSM8. LSM2, LSM3, LSM4, LSM5, LSM6, LSM7 and LSM8 form a heptameric, ring-shaped subcomplex (the LSM2-8 complex) that is part of the U4/U6-U5 tri-snRNP complex and the precatalytic spliceosome. Ubiquitous.

It localises to the nucleus. Its function is as follows. Plays a role in pre-mRNA splicing as component of the U4/U6-U5 tri-snRNP complex that is involved in spliceosome assembly, and as component of the precatalytic spliceosome (spliceosome B complex). The heptameric LSM2-8 complex binds specifically to the 3'-terminal U-tract of U6 snRNA. This Mus musculus (Mouse) protein is U6 snRNA-associated Sm-like protein LSm4 (Lsm4).